A 217-amino-acid polypeptide reads, in one-letter code: Small ribosomal subunit protein uS3 (217 aa).

Positions 38 to 106 (IRNFIKKELA…QVHINIIEIK (69 aa)) constitute a KH type-2 domain.

This sequence belongs to the universal ribosomal protein uS3 family. Part of the 30S ribosomal subunit. Forms a tight complex with proteins S10 and S14.

Binds the lower part of the 30S subunit head. Binds mRNA in the 70S ribosome, positioning it for translation. This Streptococcus suis (strain 98HAH33) protein is Small ribosomal subunit protein uS3.